Here is a 319-residue protein sequence, read N- to C-terminus: Lambda-crystallin (319 aa).

Position 2 is an N-acetylalanine (Ala-2). Ser-3 carries the post-translational modification Phosphoserine. Residues 16 to 17, Asp-36, Glu-97, and Lys-102 each bind NAD(+); that span reads LV. The residue at position 111 (Ser-111) is a Phosphoserine.

Belongs to the 3-hydroxyacyl-CoA dehydrogenase family. In terms of assembly, homodimer. Detected in eye lens, kidney, liver, heart, lung, brain and testis.

Its subcellular location is the cytoplasm. It carries out the reaction L-gulonate + NAD(+) = 3-dehydro-L-gulonate + NADH + H(+). With respect to regulation, inhibited by malonate and by inorganic phosphate. Functionally, functions as a crystallin in the rabbit eye lens. Has high L-gulonate 3-dehydrogenase activity. It also exhibits low dehydrogenase activity toward L-3-hydroxybutyrate (HBA) and L-threonate. The protein is Lambda-crystallin (CRYL1) of Oryctolagus cuniculus (Rabbit).